The chain runs to 78 residues: Acyl carrier protein (78 aa).

The Carrier domain maps to 2–77 (SSIEERVKKI…LAINYINENL (76 aa)). The residue at position 37 (Ser-37) is an O-(pantetheine 4'-phosphoryl)serine.

The protein belongs to the acyl carrier protein (ACP) family. Post-translationally, 4'-phosphopantetheine is transferred from CoA to a specific serine of apo-ACP by AcpS. This modification is essential for activity because fatty acids are bound in thioester linkage to the sulfhydryl of the prosthetic group.

The protein resides in the cytoplasm. The protein operates within lipid metabolism; fatty acid biosynthesis. Carrier of the growing fatty acid chain in fatty acid biosynthesis. This Saccharophagus degradans (strain 2-40 / ATCC 43961 / DSM 17024) protein is Acyl carrier protein.